A 272-amino-acid chain; its full sequence is Shikimate dehydrogenase (NADP(+)) (272 aa).

Shikimate-binding positions include 14-16 (SKS) and T61. Residue K65 is the Proton acceptor of the active site. E77 lines the NADP(+) pocket. Residues N86 and D102 each contribute to the shikimate site. Residues 126–130 (GAGGA), 149–154 (NRTFSR), and M213 each bind NADP(+). Y215 is a shikimate binding site. G237 provides a ligand contact to NADP(+).

It belongs to the shikimate dehydrogenase family. As to quaternary structure, homodimer.

The catalysed reaction is shikimate + NADP(+) = 3-dehydroshikimate + NADPH + H(+). It functions in the pathway metabolic intermediate biosynthesis; chorismate biosynthesis; chorismate from D-erythrose 4-phosphate and phosphoenolpyruvate: step 4/7. Its function is as follows. Involved in the biosynthesis of the chorismate, which leads to the biosynthesis of aromatic amino acids. Catalyzes the reversible NADPH linked reduction of 3-dehydroshikimate (DHSA) to yield shikimate (SA). The protein is Shikimate dehydrogenase (NADP(+)) of Photorhabdus laumondii subsp. laumondii (strain DSM 15139 / CIP 105565 / TT01) (Photorhabdus luminescens subsp. laumondii).